The chain runs to 213 residues: tRNA (guanine-N(7)-)-methyltransferase (213 aa).

Residues glutamate 44, glutamate 69, asparagine 96, and aspartate 118 each coordinate S-adenosyl-L-methionine. The active site involves aspartate 118. Lysine 122 is a binding site for substrate. The tract at residues 124 to 129 (RHEKRR) is interaction with RNA. Residues aspartate 154 and 191-194 (TEYE) each bind substrate.

Belongs to the class I-like SAM-binding methyltransferase superfamily. TrmB family.

It carries out the reaction guanosine(46) in tRNA + S-adenosyl-L-methionine = N(7)-methylguanosine(46) in tRNA + S-adenosyl-L-homocysteine. The protein operates within tRNA modification; N(7)-methylguanine-tRNA biosynthesis. Its function is as follows. Catalyzes the formation of N(7)-methylguanine at position 46 (m7G46) in tRNA. The chain is tRNA (guanine-N(7)-)-methyltransferase from Bacillus licheniformis (strain ATCC 14580 / DSM 13 / JCM 2505 / CCUG 7422 / NBRC 12200 / NCIMB 9375 / NCTC 10341 / NRRL NRS-1264 / Gibson 46).